A 114-amino-acid chain; its full sequence is uncharacterized protein (114 aa).

The tract at residues 90–114 (VESSQKRKPEESTIGMDAPKKMKRG) is disordered.

This is an uncharacterized protein from Caenorhabditis elegans.